Here is a 548-residue protein sequence, read N- to C-terminus: Chaperonin GroEL (548 aa).

ATP is bound by residues 29–32, lysine 50, 86–90, glycine 414, 478–480, and aspartate 494; these read TMGP, DGTTT, and NAA.

This sequence belongs to the chaperonin (HSP60) family. Forms a cylinder of 14 subunits composed of two heptameric rings stacked back-to-back. Interacts with the co-chaperonin GroES.

Its subcellular location is the cytoplasm. The catalysed reaction is ATP + H2O + a folded polypeptide = ADP + phosphate + an unfolded polypeptide.. Functionally, together with its co-chaperonin GroES, plays an essential role in assisting protein folding. The GroEL-GroES system forms a nano-cage that allows encapsulation of the non-native substrate proteins and provides a physical environment optimized to promote and accelerate protein folding. The polypeptide is Chaperonin GroEL (Legionella pneumophila (strain Corby)).